The following is a 454-amino-acid chain: F-box/WD repeat-containing protein 2 (454 aa).

The 48-residue stretch at 54-101 (RDFLKLLPLELSFYLLKWLDPQTLLTCCLVSKQWNKVISACTEVWQTA) folds into the F-box domain. WD repeat units follow at residues 146-183 (GHSARVYALYYKDGLLCTGSDDLSAKLWDVSTGQCVYG), 185-221 (QTHTCAAVKFDEQKLVTGSFDNTVACWEWSSGARTQH), 224-265 (GHTG…NTLT), and 276-314 (LQQCKVKSLLHSPGDYILLSADKYEIKIWPIGREINCKC). Position 298 is an N6-acetyllysine (lysine 298).

Directly interacts with SKP1 and CUL1.

Substrate-recognition component of the SCF (SKP1-CUL1-F-box protein)-type E3 ubiquitin ligase complex. The polypeptide is F-box/WD repeat-containing protein 2 (Rattus norvegicus (Rat)).